Here is a 269-residue protein sequence, read N- to C-terminus: Probable 3-deoxy-manno-octulosonic acid transferase (269 aa).

It localises to the cytoplasm. The catalysed reaction is an alpha-Kdo-(2-&gt;4)-alpha-Kdo-(2-&gt;6)-lipid IVA + CMP-3-deoxy-beta-D-manno-octulosonate = an alpha-Kdo-(2-&gt;4)-alpha-Kdo-(2-&gt;4)-alpha-Kdo-(2-&gt;6)-lipid IVA + CMP + H(+). Its pathway is bacterial outer membrane biogenesis; LPS core biosynthesis. Its function is as follows. Involved in the biosynthesis of the core oligosaccharide region of lipopolysaccharide (LPS). Required for the addition of 3-deoxy-D-manno-oct-2-ulosonic acid III (KdoIII) to the KdoII residue of the inner lipopolysaccharide core. The protein is Probable 3-deoxy-manno-octulosonic acid transferase of Salmonella typhimurium (strain LT2 / SGSC1412 / ATCC 700720).